The chain runs to 437 residues: GTPase Der (437 aa).

2 EngA-type G domains span residues 3–168 and 178–353; these read PLIA…PCPE and IKLA…LNRR. Residues 9–16, 56–60, 120–123, 184–191, 231–235, and 296–299 each bind GTP; these read GRPNVGKS, DTGGY, NKVD, DTAGL, and NKWD. The region spanning 354 to 437 is the KH-like domain; sequence QKISTSNLNR…IPITMRFLRK (84 aa).

It belongs to the TRAFAC class TrmE-Era-EngA-EngB-Septin-like GTPase superfamily. EngA (Der) GTPase family. In terms of assembly, associates with the 50S ribosomal subunit.

Functionally, GTPase that plays an essential role in the late steps of ribosome biogenesis. This chain is GTPase Der, found in Chlorobaculum tepidum (strain ATCC 49652 / DSM 12025 / NBRC 103806 / TLS) (Chlorobium tepidum).